Here is an 800-residue protein sequence, read N- to C-terminus: Protein PET111, mitochondrial (800 aa).

It to yeast YHR160C.

The protein resides in the mitochondrion matrix. Functionally, required for translation of the mitochondrial gene for cytochrome c oxidase subunit II (COX2). The polypeptide is Protein PET111, mitochondrial (PET111) (Saccharomyces cerevisiae (strain ATCC 204508 / S288c) (Baker's yeast)).